The sequence spans 491 residues: MSLTAPLRAGQMNFYDEPYNPVLNLHIQPSVKDENQRSTWPIIDTSNTSTQIARAHFEKHPPNNLRKSNFFHFVIALYDRNSQPIEVERTQFAGFVEKEKEVDGQDTRNGIHYRLSLMFQNGIRSEHDLFVRLIDSSTKQAITYEGQDKNPEMCRVLLTHEVMCSRCCEKKSCGNRNETPSDPVIIDRFFLKFFLKCNQNCLKNAGNPRDMRRFQVVLCSSARIDGPLLAVSDNMFVHNNSKHGRRTKRTDASDDSEYSESAELPSSVPVIKALFPSEGWIQGGTQVVLIGENFFEGLQVAFGTASPNWGESVQLISPHAIRVTTPPKHSAGPVDVTLQYKSKTYSRGTPLRFSYITLAEPGIEYGFQRLQKLLPKYPGDPERLPKDQILKRAAELAEALYNRTSTESLSSYYHTQFDATSDYAARTHTSPRSTLPYGAGPPALSSAVYQTSYPTVNATPAANFLNTQTGFATFGAVNPFAATLQSSSRLS.

The tract at residues 66–69 (RKSN) is interaction with DNA. Residues 154–173 (CRVLLTHEVMCSRCCEKKSC) form a C5-type zinc finger. 2 interaction with DNA regions span residues 200–207 (NCLKNAGN) and 239–242 (NNSK). Positions 240-261 (NSKHGRRTKRTDASDDSEYSES) are disordered. One can recognise an IPT/TIG domain in the interval 269-355 (PVIKALFPSE…SRGTPLRFSY (87 aa)).

It belongs to the COE family. In terms of assembly, may homodimerise. Interacts with jmjd-3.1. May interact with GFI1 homolog pag-3.

It is found in the nucleus. Transcription factor. Involved in motor neuron fate determination and maintenance, acting as an activator of gene expression in a subset of motor neurons. May act in concert with GFI1 homolog pag-3 in motor neuron fate determination. Required to maintain the expression of transcriptional repressors bnc-1 and cfi-1, which play roles in the cell fate of motor neurons. May play a role in the expression of proteins essential for axonal pathfinding and/or neuronal differentiation in both sensory and motor neurons. Cooperates with jmjd-3.1 and wdr-5.1 to ensure robust transdifferentiation of the Y rectal cell to the PDA motor neuron during larval development. This is Transcription factor unc-3 (unc-3) from Caenorhabditis elegans.